A 143-amino-acid chain; its full sequence is MLDSDARLASDLSLAVMRLSRQLRFRNPSSPVSLSQLSALTTLANEGAMTPGALAIRERVRPPSMTRVIASLADMGFVDRAPHPIDGRQVLVSVSESGAELVKAARRARQEWLAERLATLNRSERDILRSAADLMLALVDESP.

The region spanning 5–137 is the HTH marR-type domain; sequence DARLASDLSL…LRSAADLMLA (133 aa). Positions 51 to 74 form a DNA-binding region, H-T-H motif; it reads PGALAIRERVRPPSMTRVIASLAD.

As to quaternary structure, homodimer.

This is an uncharacterized protein from Mycobacterium bovis (strain ATCC BAA-935 / AF2122/97).